A 41-amino-acid polypeptide reads, in one-letter code: Photosystem II reaction center protein Y (41 aa).

A helical membrane pass occupies residues 4-22 (LIVVVLPILAAVTWVVFNI).

Belongs to the PsbY family. In terms of assembly, PSII is composed of 1 copy each of membrane proteins PsbA, PsbB, PsbC, PsbD, PsbE, PsbF, PsbH, PsbI, PsbJ, PsbK, PsbL, PsbM, PsbT, PsbX, PsbY, Psb30/Ycf12, peripheral proteins PsbO, CyanoQ (PsbQ), PsbU, PsbV and a large number of cofactors. It forms dimeric complexes.

Its subcellular location is the cellular thylakoid membrane. Loosely associated component of the core of photosystem II (PSII), it is not always seen in crystals. PSII is a light-driven water plastoquinone oxidoreductase, using light energy to abstract electrons from H(2)O, generating a proton gradient subsequently used for ATP formation. This chain is Photosystem II reaction center protein Y, found in Prochlorococcus marinus (strain MIT 9211).